Reading from the N-terminus, the 256-residue chain is Phosphatidylglycerol--prolipoprotein diacylglyceryl transferase (256 aa).

The next 3 helical transmembrane spans lie at 19–39 (VHWYGLMYLIGFVSAWLLGYW), 56–76 (LIFYSALGVILGGRVGYMLFY), and 91–111 (IWEGGMSFHGGLLGVVIAAWL). R139 contacts a 1,2-diacyl-sn-glycero-3-phospho-(1'-sn-glycerol). Residues 231–251 (FGWLTMGQVLSIPMLLIGIWL) traverse the membrane as a helical segment.

This sequence belongs to the Lgt family.

It is found in the cell inner membrane. It catalyses the reaction L-cysteinyl-[prolipoprotein] + a 1,2-diacyl-sn-glycero-3-phospho-(1'-sn-glycerol) = an S-1,2-diacyl-sn-glyceryl-L-cysteinyl-[prolipoprotein] + sn-glycerol 1-phosphate + H(+). It functions in the pathway protein modification; lipoprotein biosynthesis (diacylglyceryl transfer). Catalyzes the transfer of the diacylglyceryl group from phosphatidylglycerol to the sulfhydryl group of the N-terminal cysteine of a prolipoprotein, the first step in the formation of mature lipoproteins. The chain is Phosphatidylglycerol--prolipoprotein diacylglyceryl transferase from Legionella pneumophila (strain Lens).